The chain runs to 173 residues: Crossover junction endodeoxyribonuclease RuvC (173 aa).

Residues Asp8, Glu67, and Asp139 contribute to the active site. Mg(2+)-binding residues include Asp8, Glu67, and Asp139.

Belongs to the RuvC family. In terms of assembly, homodimer which binds Holliday junction (HJ) DNA. The HJ becomes 2-fold symmetrical on binding to RuvC with unstacked arms; it has a different conformation from HJ DNA in complex with RuvA. In the full resolvosome a probable DNA-RuvA(4)-RuvB(12)-RuvC(2) complex forms which resolves the HJ. The cofactor is Mg(2+).

The protein resides in the cytoplasm. It carries out the reaction Endonucleolytic cleavage at a junction such as a reciprocal single-stranded crossover between two homologous DNA duplexes (Holliday junction).. Functionally, the RuvA-RuvB-RuvC complex processes Holliday junction (HJ) DNA during genetic recombination and DNA repair. Endonuclease that resolves HJ intermediates. Cleaves cruciform DNA by making single-stranded nicks across the HJ at symmetrical positions within the homologous arms, yielding a 5'-phosphate and a 3'-hydroxyl group; requires a central core of homology in the junction. The consensus cleavage sequence is 5'-(A/T)TT(C/G)-3'. Cleavage occurs on the 3'-side of the TT dinucleotide at the point of strand exchange. HJ branch migration catalyzed by RuvA-RuvB allows RuvC to scan DNA until it finds its consensus sequence, where it cleaves and resolves the cruciform DNA. This Serratia proteamaculans (strain 568) protein is Crossover junction endodeoxyribonuclease RuvC.